Reading from the N-terminus, the 315-residue chain is UDP-3-O-acyl-N-acetylglucosamine deacetylase (315 aa).

Positions 78, 235, and 239 each coordinate Zn(2+). His-262 (proton donor) is an active-site residue.

Belongs to the LpxC family. Requires Zn(2+) as cofactor.

The catalysed reaction is a UDP-3-O-[(3R)-3-hydroxyacyl]-N-acetyl-alpha-D-glucosamine + H2O = a UDP-3-O-[(3R)-3-hydroxyacyl]-alpha-D-glucosamine + acetate. The protein operates within glycolipid biosynthesis; lipid IV(A) biosynthesis; lipid IV(A) from (3R)-3-hydroxytetradecanoyl-[acyl-carrier-protein] and UDP-N-acetyl-alpha-D-glucosamine: step 2/6. Catalyzes the hydrolysis of UDP-3-O-myristoyl-N-acetylglucosamine to form UDP-3-O-myristoylglucosamine and acetate, the committed step in lipid A biosynthesis. The chain is UDP-3-O-acyl-N-acetylglucosamine deacetylase from Syntrophus aciditrophicus (strain SB).